We begin with the raw amino-acid sequence, 563 residues long: Probable tRNA (uracil-O(2)-)-methyltransferase (563 aa).

The segment at 536–563 (TIRKAPCWMSLHHPDGCPVGQEACRYEH) adopts a C3H1-type zinc-finger fold.

Belongs to the TRM44 family.

It localises to the cytoplasm. The catalysed reaction is uridine(44) in tRNA(Ser) + S-adenosyl-L-methionine = 2'-O-methyluridine(44) in tRNA(Ser) + S-adenosyl-L-homocysteine + H(+). Its function is as follows. Probable adenosyl-L-methionine (AdoMet)-dependent tRNA (uracil-O(2)-)-methyltransferase. This chain is Probable tRNA (uracil-O(2)-)-methyltransferase, found in Caenorhabditis elegans.